Reading from the N-terminus, the 557-residue chain is Dihydroxy-acid dehydratase (557 aa).

Aspartate 78 provides a ligand contact to Mg(2+). Cysteine 119 contributes to the [2Fe-2S] cluster binding site. Mg(2+) contacts are provided by aspartate 120 and lysine 121. Lysine 121 carries the N6-carboxylysine modification. Residue cysteine 192 coordinates [2Fe-2S] cluster. Residue glutamate 442 participates in Mg(2+) binding. Serine 468 acts as the Proton acceptor in catalysis.

Belongs to the IlvD/Edd family. In terms of assembly, homodimer. [2Fe-2S] cluster is required as a cofactor. It depends on Mg(2+) as a cofactor.

The catalysed reaction is (2R)-2,3-dihydroxy-3-methylbutanoate = 3-methyl-2-oxobutanoate + H2O. It carries out the reaction (2R,3R)-2,3-dihydroxy-3-methylpentanoate = (S)-3-methyl-2-oxopentanoate + H2O. The protein operates within amino-acid biosynthesis; L-isoleucine biosynthesis; L-isoleucine from 2-oxobutanoate: step 3/4. It functions in the pathway amino-acid biosynthesis; L-valine biosynthesis; L-valine from pyruvate: step 3/4. Functionally, functions in the biosynthesis of branched-chain amino acids. Catalyzes the dehydration of (2R,3R)-2,3-dihydroxy-3-methylpentanoate (2,3-dihydroxy-3-methylvalerate) into 2-oxo-3-methylpentanoate (2-oxo-3-methylvalerate) and of (2R)-2,3-dihydroxy-3-methylbutanoate (2,3-dihydroxyisovalerate) into 2-oxo-3-methylbutanoate (2-oxoisovalerate), the penultimate precursor to L-isoleucine and L-valine, respectively. In Bacillus cereus (strain AH187), this protein is Dihydroxy-acid dehydratase.